Reading from the N-terminus, the 559-residue chain is Coiled-coil domain-containing protein 63 (559 aa).

Coiled-coil stretches lie at residues 14 to 70 (ELSE…QAET), 185 to 261 (EKAA…KLKS), and 364 to 414 (QQQS…VEKL).

Plays a role in spermiogenesis. Involved in the elongation of flagella and the formation of sperm heads. The polypeptide is Coiled-coil domain-containing protein 63 (Rattus norvegicus (Rat)).